Consider the following 358-residue polypeptide: DNA-directed RNA polymerase subunit alpha (358 aa).

Residues 1-231 (MIQNVTDDKI…NIFLSLSNSS (231 aa)) form an alpha N-terminal domain (alpha-NTD) region. Positions 266 to 358 (QESLGWKKIS…LELINNKDIS (93 aa)) are alpha C-terminal domain (alpha-CTD).

Belongs to the RNA polymerase alpha chain family. As to quaternary structure, in plastids the minimal PEP RNA polymerase catalytic core is composed of four subunits: alpha, beta, beta', and beta''. When a (nuclear-encoded) sigma factor is associated with the core the holoenzyme is formed, which can initiate transcription.

The protein localises to the plastid. The protein resides in the chloroplast. The enzyme catalyses RNA(n) + a ribonucleoside 5'-triphosphate = RNA(n+1) + diphosphate. Its function is as follows. DNA-dependent RNA polymerase catalyzes the transcription of DNA into RNA using the four ribonucleoside triphosphates as substrates. The chain is DNA-directed RNA polymerase subunit alpha from Chara vulgaris (Common stonewort).